A 263-amino-acid polypeptide reads, in one-letter code: Indole-3-glycerol phosphate synthase (263 aa).

It belongs to the TrpC family.

It catalyses the reaction 1-(2-carboxyphenylamino)-1-deoxy-D-ribulose 5-phosphate + H(+) = (1S,2R)-1-C-(indol-3-yl)glycerol 3-phosphate + CO2 + H2O. Its pathway is amino-acid biosynthesis; L-tryptophan biosynthesis; L-tryptophan from chorismate: step 4/5. This chain is Indole-3-glycerol phosphate synthase, found in Polaromonas naphthalenivorans (strain CJ2).